The chain runs to 76 residues: UPF0291 protein BT9727_1737 (76 aa).

Belongs to the UPF0291 family.

It localises to the cytoplasm. The protein is UPF0291 protein BT9727_1737 of Bacillus thuringiensis subsp. konkukian (strain 97-27).